Consider the following 755-residue polypeptide: Putative two-component response regulator-like APRR6 (755 aa).

In terms of domain architecture, Response regulatory spans 14-128; sequence SILLIDHDTA…DIKNMWQHVF (115 aa).

The protein belongs to the ARR-like family.

Its subcellular location is the nucleus. This chain is Putative two-component response regulator-like APRR6 (APRR6), found in Arabidopsis thaliana (Mouse-ear cress).